The sequence spans 507 residues: ATP synthase subunit alpha, chloroplastic (507 aa).

170–177 (GDRQTGKT) contributes to the ATP binding site.

This sequence belongs to the ATPase alpha/beta chains family. As to quaternary structure, F-type ATPases have 2 components, CF(1) - the catalytic core - and CF(0) - the membrane proton channel. CF(1) has five subunits: alpha(3), beta(3), gamma(1), delta(1), epsilon(1). CF(0) has four main subunits: a, b, b' and c.

It is found in the plastid. The protein resides in the chloroplast thylakoid membrane. It catalyses the reaction ATP + H2O + 4 H(+)(in) = ADP + phosphate + 5 H(+)(out). Its function is as follows. Produces ATP from ADP in the presence of a proton gradient across the membrane. The alpha chain is a regulatory subunit. In Illicium oligandrum (Star anise), this protein is ATP synthase subunit alpha, chloroplastic.